Reading from the N-terminus, the 370-residue chain is Gibberellin 3-beta-dioxygenase 2-1 (370 aa).

A Fe2OG dioxygenase domain is found at 205 to 306; it reads MTATMHLNWY…RISLGYFLGP (102 aa). His229, Asp231, and His287 together coordinate Fe cation. The active site involves Arg297.

Belongs to the iron/ascorbate-dependent oxidoreductase family. GA3OX subfamily. L-ascorbate is required as a cofactor. It depends on Fe cation as a cofactor. Expressed in internodes, nodes and the ear of the elongating stem.

The catalysed reaction is gibberellin A20 + 2-oxoglutarate + O2 = gibberellin A1 + succinate + CO2. Functionally, converts the inactive gibberellin precursors GA9 and GA20 in the bioactives gibberellins GA4 and GA1. Also accepts GA15, GA44, the 2,3-unsaturated GA5 and 2,3-dihydroGA9 as substrate. No activity with GA12, GA53, GA24, GA19 and GA25. Also possesses 2-beta-hydroxylase, 2,3-desaturase, 2,3-epoxidase and 13-hydroxylase activities. The protein is Gibberellin 3-beta-dioxygenase 2-1 (GA3ox2-1) of Triticum aestivum (Wheat).